The sequence spans 285 residues: tRNA-cytidine(32) 2-sulfurtransferase (285 aa).

Residues 48–53 (SGGKDS) carry the PP-loop motif motif. [4Fe-4S] cluster is bound by residues C122, C125, and C213.

Belongs to the TtcA family. Homodimer. It depends on Mg(2+) as a cofactor. The cofactor is [4Fe-4S] cluster.

The protein localises to the cytoplasm. It carries out the reaction cytidine(32) in tRNA + S-sulfanyl-L-cysteinyl-[cysteine desulfurase] + AH2 + ATP = 2-thiocytidine(32) in tRNA + L-cysteinyl-[cysteine desulfurase] + A + AMP + diphosphate + H(+). It functions in the pathway tRNA modification. In terms of biological role, catalyzes the ATP-dependent 2-thiolation of cytidine in position 32 of tRNA, to form 2-thiocytidine (s(2)C32). The sulfur atoms are provided by the cysteine/cysteine desulfurase (IscS) system. This chain is tRNA-cytidine(32) 2-sulfurtransferase, found in Cytophaga hutchinsonii (strain ATCC 33406 / DSM 1761 / CIP 103989 / NBRC 15051 / NCIMB 9469 / D465).